The following is a 307-amino-acid chain: tRNA pseudouridine synthase B (307 aa).

The Nucleophile role is filled by Asp-39.

Belongs to the pseudouridine synthase TruB family. Type 1 subfamily.

It catalyses the reaction uridine(55) in tRNA = pseudouridine(55) in tRNA. Responsible for synthesis of pseudouridine from uracil-55 in the psi GC loop of transfer RNAs. This is tRNA pseudouridine synthase B from Lactiplantibacillus plantarum (strain ATCC BAA-793 / NCIMB 8826 / WCFS1) (Lactobacillus plantarum).